A 342-amino-acid chain; its full sequence is GTPase Obg (342 aa).

The region spanning Met1–Ile159 is the Obg domain. Residues Ala160 to Asp327 enclose the OBG-type G domain. GTP is bound by residues Gly166 to Ser173, Phe191 to Val195, Asp212 to Gly215, Asn279 to Asp282, and Ser308 to Val310. The Mg(2+) site is built by Ser173 and Thr193.

This sequence belongs to the TRAFAC class OBG-HflX-like GTPase superfamily. OBG GTPase family. In terms of assembly, monomer. Requires Mg(2+) as cofactor.

It localises to the cytoplasm. Its function is as follows. An essential GTPase which binds GTP, GDP and possibly (p)ppGpp with moderate affinity, with high nucleotide exchange rates and a fairly low GTP hydrolysis rate. Plays a role in control of the cell cycle, stress response, ribosome biogenesis and in those bacteria that undergo differentiation, in morphogenesis control. The chain is GTPase Obg from Cereibacter sphaeroides (strain ATCC 17029 / ATH 2.4.9) (Rhodobacter sphaeroides).